Reading from the N-terminus, the 400-residue chain is DNA primase large subunit PriL (400 aa).

4 residues coordinate [4Fe-4S] cluster: cysteine 247, cysteine 356, cysteine 367, and cysteine 373.

The protein belongs to the eukaryotic-type primase large subunit family. In terms of assembly, heterodimer of a small subunit (PriS) and a large subunit (PriL). The cofactor is [4Fe-4S] cluster.

Regulatory subunit of DNA primase, an RNA polymerase that catalyzes the synthesis of short RNA molecules used as primers for DNA polymerase during DNA replication. Stabilizes and modulates the activity of the small subunit, increasing the rate of DNA synthesis, and conferring RNA synthesis capability. The DNA polymerase activity may enable DNA primase to also catalyze primer extension after primer synthesis. May also play a role in DNA repair. This is DNA primase large subunit PriL from Thermococcus kodakarensis (strain ATCC BAA-918 / JCM 12380 / KOD1) (Pyrococcus kodakaraensis (strain KOD1)).